The sequence spans 523 residues: Ubiquilin (523 aa).

The Ubiquitin-like domain occupies V2–P77. Residues L70–G99 are disordered. STI1 domains are found at residues V100–M135 and N139–M178. A compositionally biased stretch (low complexity) spans N215–N227. A disordered region spans residues N215–G325. Positions P228 to P241 are enriched in polar residues. The segment covering P245 to N278 has biased composition (low complexity). A compositionally biased stretch (gly residues) spans S285–N296. Low complexity predominate over residues N297–G310. 2 STI1 domains span residues D339–M380 and N383–M415. The UBA domain occupies P480 to R523.

Its function is as follows. Stable protein which acts as an antagonist of nosA by repressing cellular differentiation after the tight-aggregate stage, when cells differentiate into two precursor cell types, prespore and prestalk cells, prior to the formation of fruiting bodies. This is Ubiquilin (ubqln) from Dictyostelium discoideum (Social amoeba).